A 533-amino-acid chain; its full sequence is D-2-hydroxyglutarate dehydrogenase, mitochondrial (533 aa).

The N-terminal 55 residues, 1-55, are a transit peptide targeting the mitochondrion; it reads MGLFQKCSRLSLRSSYMWSVCPQYSIAVTARETPDRALIVHWTQHRDVHNSRRLG. The FAD-binding PCMH-type domain occupies 107 to 286; sequence VQGSSDVLLR…TAVSILCPRK (180 aa). Residues Arg-397, Thr-401, and Lys-412 each coordinate (R)-2-hydroxyglutarate. Arg-397 contacts (R)-lactate. 3 residues coordinate (R)-malate: Arg-397, Thr-401, and Lys-412. Zn(2+) is bound by residues His-445 and His-452. (R)-2-hydroxyglutarate is bound at residue Asn-454. Glu-486 serves as a coordination point for Zn(2+). His-487 serves as a coordination point for (R)-2-hydroxyglutarate. Position 487 (His-487) interacts with (R)-lactate. Residue His-487 participates in (R)-malate binding.

It belongs to the FAD-binding oxidoreductase/transferase type 4 family. FAD is required as a cofactor.

The protein resides in the mitochondrion. It catalyses the reaction (R)-2-hydroxyglutarate + A = 2-oxoglutarate + AH2. The catalysed reaction is (R)-malate + A = oxaloacetate + AH2. Its function is as follows. Catalyzes the oxidation of D-2-hydroxyglutarate (D-2-HG) to alpha-ketoglutarate. Also catalyzes the oxidation of other D-2-hydroxyacids, such as D-malate (D-MAL) and D-lactate (D-LAC). Exhibits high activities towards D-2-HG and D-MAL but a very weak activity towards D-LAC. This Danio rerio (Zebrafish) protein is D-2-hydroxyglutarate dehydrogenase, mitochondrial (d2hgdh).